A 93-amino-acid polypeptide reads, in one-letter code: Protein translocase subunit SecE (93 aa).

Positions 1–33 (MTDALGSIDMPDAEDETREKKARKGGKRGKKGP) are disordered. Basic residues predominate over residues 20-33 (KKARKGGKRGKKGP). A helical transmembrane segment spans residues 64–84 (TVVIVFVVIMIGLVTVIDFGF).

This sequence belongs to the SecE/SEC61-gamma family. Component of the Sec protein translocase complex. Heterotrimer consisting of SecY, SecE and SecG subunits. The heterotrimers can form oligomers, although 1 heterotrimer is thought to be able to translocate proteins. Interacts with the ribosome. Interacts with SecDF, and other proteins may be involved. Interacts with SecA.

The protein localises to the cell membrane. Essential subunit of the Sec protein translocation channel SecYEG. Clamps together the 2 halves of SecY. May contact the channel plug during translocation. The protein is Protein translocase subunit SecE of Streptomyces virginiae (Streptomyces cinnamonensis).